An 871-amino-acid polypeptide reads, in one-letter code: Alanine--tRNA ligase (871 aa).

Positions 561, 565, 662, and 666 each coordinate Zn(2+).

Belongs to the class-II aminoacyl-tRNA synthetase family. It depends on Zn(2+) as a cofactor.

Its subcellular location is the cytoplasm. It carries out the reaction tRNA(Ala) + L-alanine + ATP = L-alanyl-tRNA(Ala) + AMP + diphosphate. Functionally, catalyzes the attachment of alanine to tRNA(Ala) in a two-step reaction: alanine is first activated by ATP to form Ala-AMP and then transferred to the acceptor end of tRNA(Ala). Also edits incorrectly charged Ser-tRNA(Ala) and Gly-tRNA(Ala) via its editing domain. This chain is Alanine--tRNA ligase, found in Dechloromonas aromatica (strain RCB).